Consider the following 525-residue polypeptide: MSRAGRQLALLLCSCCVAVAIPGGLAEEGCPAEPHQASRYVAAVYEHQSFLSPDPLALTSREQALELMHRNLDVYEQQVTTAARKGAQIIVFPEDGIHGFNFTRTSIYPFLDFMPSPRSVRWNPCLEPHRFNDTEVLQRLSCMAMKGEMFLVANLGTKQPCHSSDPGCPSDGRYQFNTNVVFSSNGTLVDRYRKHNLYFEAAFDTPLEVDHTVFDTPFAGKFGVFTCFDILFFDPAVRLLQDSEVKHVVYPTAWMNQLPLLAAIQIQRGFAIAFVINLLAANIHHPSLGMTGSGIHTPLKSFWHHSMDSPEGHLIIAEVARNPPGLISAGNATGKTDPFHRKFLQLLAGDPYSEKDAQDVHCDAAPKSTTNASPTFNSEMMYDNFTLVPVWGRDGHVHVCAHGLCCHLLYQRPTVSQELYALGVFDGLHTVHGTYYVQVCALVKCGGLGFDTCGQEITEAMGMFEFHLWGNFSTSYIFPMLLTSGMMLETPDQLGWESDQYFLKKRGLSSGLVTAALYGRLYERD.

The first 26 residues, 1-26 (MSRAGRQLALLLCSCCVAVAIPGGLA), serve as a signal peptide directing secretion. The CN hydrolase domain maps to 54–333 (DPLALTSREQ…PGLISAGNAT (280 aa)). The active-site Proton acceptor is the E94. N132 and N185 each carry an N-linked (GlcNAc...) asparagine glycan. Catalysis depends on K194, which acts as the Proton donor. C227 functions as the Nucleophile in the catalytic mechanism. An N-linked (GlcNAc...) asparagine glycan is attached at N384.

The protein belongs to the carbon-nitrogen hydrolase superfamily. BTD/VNN family.

The protein resides in the secreted. Its subcellular location is the extracellular space. The enzyme catalyses biocytin + H2O = biotin + L-lysine. The catalysed reaction is biotin amide + H2O = biotin + NH4(+). In terms of biological role, catalytic release of biotin from biocytin, the product of biotin-dependent carboxylases degradation. In Bos taurus (Bovine), this protein is Biotinidase (BTD).